Here is a 972-residue protein sequence, read N- to C-terminus: Mast/stem cell growth factor receptor Kit (972 aa).

The first 25 residues, 1–25 (MRGARRAWDFLFVLQLLLRVQTGSS), serve as a signal peptide directing secretion. The Extracellular segment spans residues 26 to 520 (QPSVSPEELS…QIHAHTLFTP (495 aa)). Ig-like C2-type domains lie at 27 to 112 (PSVS…VFVR), 121 to 205 (DPPL…LKVR), 212 to 308 (PVVA…LEVV), 317 to 410 (PMMN…VYVN), and 413 to 507 (PEIL…FNFA). 4 disulfide bridges follow: cysteine 58–cysteine 97, cysteine 136–cysteine 186, cysteine 151–cysteine 183, and cysteine 233–cysteine 290. Asparagine 94 and asparagine 145 each carry an N-linked (GlcNAc...) asparagine glycan. N-linked (GlcNAc...) asparagine glycosylation is found at asparagine 283, asparagine 293, asparagine 300, asparagine 320, asparagine 352, asparagine 367, asparagine 400, asparagine 463, and asparagine 486. Cysteines 428 and 491 form a disulfide. The helical transmembrane segment at 521–541 (LLIGFVIAAGMMCIIVMILTY) threads the bilayer. Topologically, residues 542–972 (KYLQKPMYEV…TQPLLVHEDV (431 aa)) are cytoplasmic. Phosphotyrosine; by autocatalysis is present on residues tyrosine 543, tyrosine 549, tyrosine 564, and tyrosine 566. Tyrosine 564 contacts Mg(2+). The important for interaction with phosphotyrosine-binding proteins stretch occupies residues 564–566 (YVY). Positions 585–933 (LSFGKTLGAG…ISESTNHIYS (349 aa)) constitute a Protein kinase domain. Residues 592-599 (GAGAFGKV), lysine 619, and 667-673 (EYCCYGD) contribute to the ATP site. Phosphotyrosine; by autocatalysis occurs at positions 699, 717, and 726. Phosphoserine; by PKC/PRKCA occurs at positions 737 and 742. Residue aspartate 788 is the Proton acceptor of the active site. Arginine 792 lines the ATP pocket. Positions 793 and 806 each coordinate Mg(2+). Serine 817 is subject to Phosphoserine. The residue at position 819 (tyrosine 819) is a Phosphotyrosine; by autocatalysis. Serine 887 is modified (phosphoserine). A phosphotyrosine; by autocatalysis mark is found at tyrosine 896 and tyrosine 932. At serine 955 the chain carries Phosphoserine.

This sequence belongs to the protein kinase superfamily. Tyr protein kinase family. CSF-1/PDGF receptor subfamily. Monomer in the absence of bound KITLG/SCF. Homodimer in the presence of bound KITLG/SCF, forming a heterotetramer with two KITLG/SCF molecules. Interacts (via phosphorylated tyrosine residues) with the adapter proteins GRB2 and GRB7 (via SH2 domain), and SH2B2/APS. Interacts (via C-terminus) with MPDZ (via the tenth PDZ domain). Interacts (via phosphorylated tyrosine residues) with PIK3R1 and PIK3 catalytic subunit. Interacts (via phosphorylated tyrosine) with CRK (isoform Crk-II), FYN, SHC1 and MATK/CHK (via SH2 domain). Interacts with LYN and FES/FPS. Interacts (via phosphorylated tyrosine residues) with the protein phosphatases PTPN6/SHP-1 (via SH2 domain), PTPN11/SHP-2 (via SH2 domain) and PTPRU. Interacts with PLCG1. Interacts with DOK1 and TEC. Interacts with IL1RAP (independent of stimulation with KITLG/SCF). A mast cell-specific KITLG/SCF-induced interleukin-33 signaling complex contains IL1RL1, IL1RAP, KIT and MYD88. Post-translationally, ubiquitinated by SOCS6. KIT is rapidly ubiquitinated after autophosphorylation induced by KITLG/SCF binding, leading to internalization and degradation. In terms of processing, autophosphorylated on tyrosine residues. KITLG/SCF binding promotes autophosphorylation. Phosphorylated tyrosine residues are important for interaction with specific binding partners.

Its subcellular location is the cell membrane. The catalysed reaction is L-tyrosyl-[protein] + ATP = O-phospho-L-tyrosyl-[protein] + ADP + H(+). Present in an inactive conformation in the absence of bound ligand. KITLG/SCF binding leads to dimerization and activation by autophosphorylation on tyrosine residues. Activity is down-regulated by PRKCA-mediated phosphorylation on serine residues. In terms of biological role, tyrosine-protein kinase that acts as a cell-surface receptor for the cytokine KITLG/SCF and plays an essential role in the regulation of cell survival and proliferation, hematopoiesis, stem cell maintenance, gametogenesis, mast cell development, migration and function, and in melanogenesis. In response to KITLG/SCF binding, KIT can activate several signaling pathways. Phosphorylates PIK3R1, PLCG1, SH2B2/APS and CBL. Activates the AKT1 signaling pathway by phosphorylation of PIK3R1, the regulatory subunit of phosphatidylinositol 3-kinase. Activated KIT also transmits signals via GRB2 and activation of RAS, RAF1 and the MAP kinases MAPK1/ERK2 and/or MAPK3/ERK1. Promotes activation of STAT family members STAT1, STAT3, STAT5A and STAT5B. Activation of PLCG1 leads to the production of the cellular signaling molecules diacylglycerol and inositol 1,4,5-trisphosphate. KIT signaling is modulated by protein phosphatases, and by rapid internalization and degradation of the receptor. Activated KIT promotes phosphorylation of the protein phosphatases PTPN6/SHP-1 and PTPRU, and of the transcription factors STAT1, STAT3, STAT5A and STAT5B. Promotes phosphorylation of PIK3R1, CBL, CRK (isoform Crk-II), LYN, MAPK1/ERK2 and/or MAPK3/ERK1, PLCG1, SRC and SHC1. This chain is Mast/stem cell growth factor receptor Kit (KIT), found in Sus scrofa (Pig).